A 149-amino-acid polypeptide reads, in one-letter code: MKLTDYVKQVSLEDFGRAFIHHVQWNRRLRSTGGRFFPKDGHLDFNPKVYQKLGMEVFRKIVRHELCHYHLYFQGKGYQHKDRDFKELLKAVDGLRFVPSLPNSNSKPLKLYRCQSCQQRYQRKRRIDTKRYRCGLCRGKLLLINQPED.

In terms of domain architecture, SprT-like spans 5-143 (DYVKQVSLED…CGLCRGKLLL (139 aa)). A Zn(2+)-binding site is contributed by His64. Glu65 is a catalytic residue. A Zn(2+)-binding site is contributed by His68.

Belongs to the SprT family. It depends on Zn(2+) as a cofactor.

The protein resides in the cytoplasm. This chain is Protein SprT-like, found in Streptococcus pneumoniae (strain Hungary19A-6).